The sequence spans 298 residues: MGQNGALQPIQLVIITGMSGAGKTVAIQSFEDLGFFCIDNLPPTLLPKFLELVKESGNKMNKVALVMDLRSRDFFDHLFAALDELAEQAWVIPQVLFLDAQDSTLVARYKETRRTHPLAPNEPPLEGIRLERKLLEELKGRAQIIYDTTGLKPRELREKIIRQFSSHAQSGFTINVMSFGFKYGIPIDADLVFDVRFLPNPHYIEHMRPKTGLDDDVSSYVLKWGETQKFLEKLIDLLSFMLPYYQREGKSQLVIAIGCTGGQHRSVALAEYIARHFSDDYKTVVSHRDMERRKDIHR.

17–24 contacts ATP; that stretch reads GMSGAGKT. 68-71 is a GTP binding site; sequence DLRS.

This sequence belongs to the RapZ-like family.

Displays ATPase and GTPase activities. This Geobacillus kaustophilus (strain HTA426) protein is Nucleotide-binding protein GK3066.